The chain runs to 386 residues: Protein U3 (386 aa).

This chain is Protein U3 (U3), found in Human herpesvirus 6B (strain Z29) (HHV-6 variant B).